The sequence spans 142 residues: Organic hydroperoxide resistance protein-like 2 (142 aa).

Belongs to the OsmC/Ohr family.

This is Organic hydroperoxide resistance protein-like 2 from Staphylococcus epidermidis (strain ATCC 12228 / FDA PCI 1200).